Consider the following 342-residue polypeptide: L-lysine 2,3-aminomutase (342 aa).

The Radical SAM core domain maps to 106 to 329 (HKYHNRALLL…PKLAREIGGE (224 aa)). Cys120, Cys124, and Cys127 together coordinate [4Fe-4S] cluster. Residue Lys332 is modified to N6-(pyridoxal phosphate)lysine.

It belongs to the radical SAM superfamily. KamA family. Requires [4Fe-4S] cluster as cofactor. Pyridoxal 5'-phosphate is required as a cofactor.

The enzyme catalyses L-lysine = D-beta-lysine. In terms of biological role, with EpmA is involved in the beta-lysylation step of the post-translational modification of translation elongation factor P (EF-P) on 'Lys-34'. EpmB appears to act before EpmA. Displays lysine 2,3-aminomutase activity, producing (R)-beta-lysine from (S)-alpha-lysine (L-lysine). Cannot use (S)-ornithine or (R)-alpha-lysine as a substrate. The protein is L-lysine 2,3-aminomutase (epmB) of Escherichia coli (strain K12).